A 198-amino-acid polypeptide reads, in one-letter code: Holliday junction branch migration complex subunit RuvA (198 aa).

Residues 1–63 (MYDYIKGQLT…EDAHLLFGFH (63 aa)) are domain I. Residues 64-142 (TEDEKDVFLK…EAPQETGNTK (79 aa)) form a domain II region. The tract at residues 143–147 (ARSNK) is flexible linker. Residues 148 to 198 (AGNTQLDEAIEALLALGYKATELKKIRAFFEGTSETAEQYIKSALKLLMKG) are domain III.

This sequence belongs to the RuvA family. Homotetramer. Forms an RuvA(8)-RuvB(12)-Holliday junction (HJ) complex. HJ DNA is sandwiched between 2 RuvA tetramers; dsDNA enters through RuvA and exits via RuvB. An RuvB hexamer assembles on each DNA strand where it exits the tetramer. Each RuvB hexamer is contacted by two RuvA subunits (via domain III) on 2 adjacent RuvB subunits; this complex drives branch migration. In the full resolvosome a probable DNA-RuvA(4)-RuvB(12)-RuvC(2) complex forms which resolves the HJ.

The protein localises to the cytoplasm. The RuvA-RuvB-RuvC complex processes Holliday junction (HJ) DNA during genetic recombination and DNA repair, while the RuvA-RuvB complex plays an important role in the rescue of blocked DNA replication forks via replication fork reversal (RFR). RuvA specifically binds to HJ cruciform DNA, conferring on it an open structure. The RuvB hexamer acts as an ATP-dependent pump, pulling dsDNA into and through the RuvAB complex. HJ branch migration allows RuvC to scan DNA until it finds its consensus sequence, where it cleaves and resolves the cruciform DNA. This Streptococcus pyogenes serotype M12 (strain MGAS2096) protein is Holliday junction branch migration complex subunit RuvA.